We begin with the raw amino-acid sequence, 476 residues long: ATP synthase subunit beta (476 aa).

Residue 162 to 169 participates in ATP binding; the sequence is GGAGVGKT.

Belongs to the ATPase alpha/beta chains family. In terms of assembly, F-type ATPases have 2 components, CF(1) - the catalytic core - and CF(0) - the membrane proton channel. CF(1) has five subunits: alpha(3), beta(3), gamma(1), delta(1), epsilon(1). CF(0) has three main subunits: a(1), b(2) and c(9-12). The alpha and beta chains form an alternating ring which encloses part of the gamma chain. CF(1) is attached to CF(0) by a central stalk formed by the gamma and epsilon chains, while a peripheral stalk is formed by the delta and b chains.

It localises to the cell membrane. The catalysed reaction is ATP + H2O + 4 H(+)(in) = ADP + phosphate + 5 H(+)(out). Its function is as follows. Produces ATP from ADP in the presence of a proton gradient across the membrane. The catalytic sites are hosted primarily by the beta subunits. The polypeptide is ATP synthase subunit beta (Mycoplasma capricolum subsp. capricolum (strain California kid / ATCC 27343 / NCTC 10154)).